Here is a 217-residue protein sequence, read N- to C-terminus: Urease accessory protein UreG (217 aa).

Basic residues predominate over residues 1–18 (MNAPHHPAHSTVRTKKLP). Positions 1 to 24 (MNAPHHPAHSTVRTKKLPPLRVGV) are disordered. Position 26 to 33 (26 to 33 (GPVGSGKT)) interacts with GTP.

This sequence belongs to the SIMIBI class G3E GTPase family. UreG subfamily. Homodimer. UreD, UreF and UreG form a complex that acts as a GTP-hydrolysis-dependent molecular chaperone, activating the urease apoprotein by helping to assemble the nickel containing metallocenter of UreC. The UreE protein probably delivers the nickel.

The protein resides in the cytoplasm. In terms of biological role, facilitates the functional incorporation of the urease nickel metallocenter. This process requires GTP hydrolysis, probably effectuated by UreG. This is Urease accessory protein UreG from Paraburkholderia xenovorans (strain LB400).